Consider the following 497-residue polypeptide: Replication factor C large subunit (497 aa).

50-57 (GPAGVGKT) lines the ATP pocket. Over residues 428-455 (KRRSLGRDEGKAFFEKKPKKQTPDKKQM) the composition is skewed to basic and acidic residues. The interval 428–497 (KRRSLGRDEG…AKPQKTLFDF (70 aa)) is disordered. Residues 456-465 (DLTQIINSTP) are compositionally biased toward polar residues. Over residues 466-476 (QEDKVEKKETE) the composition is skewed to basic and acidic residues.

Belongs to the activator 1 small subunits family. RfcL subfamily. As to quaternary structure, heteromultimer composed of small subunits (RfcS) and large subunits (RfcL).

Its function is as follows. Part of the RFC clamp loader complex which loads the PCNA sliding clamp onto DNA. This is Replication factor C large subunit from Methanococcoides burtonii (strain DSM 6242 / NBRC 107633 / OCM 468 / ACE-M).